The primary structure comprises 431 residues: NADH-quinone oxidoreductase subunit F (431 aa).

54-63 (GRGGAGFPTG) serves as a coordination point for NAD(+). Residue 167–214 (GAGAYICGEETALLESLEGKKGMPRMKPPFPAGSGLYGCPTTVNNVES) coordinates FMN. The [4Fe-4S] cluster site is built by C346, C349, C352, and C392.

It belongs to the complex I 51 kDa subunit family. The cofactor is FMN. [4Fe-4S] cluster serves as cofactor.

It carries out the reaction a quinone + NADH + 5 H(+)(in) = a quinol + NAD(+) + 4 H(+)(out). In terms of biological role, NDH-1 shuttles electrons from NADH, via FMN and iron-sulfur (Fe-S) centers, to quinones in the respiratory chain. The immediate electron acceptor for the enzyme in this species is believed to be ubiquinone. Couples the redox reaction to proton translocation (for every two electrons transferred, four hydrogen ions are translocated across the cytoplasmic membrane), and thus conserves the redox energy in a proton gradient. This chain is NADH-quinone oxidoreductase subunit F (nuoF), found in Rhodobacter capsulatus (Rhodopseudomonas capsulata).